The primary structure comprises 272 residues: Putative B3 domain-containing protein Os02g0455900 (272 aa).

Positions 30 to 134 (GKVLMPSDVS…RFFICCRCTC (105 aa)) form a DNA-binding region, TF-B3. Residues 189–227 (TASLGCAAAQPPQVPPTPTPRRRRRSMMVHPEPPEHTTD) form a disordered region.

It is found in the nucleus. The chain is Putative B3 domain-containing protein Os02g0455900 from Oryza sativa subsp. japonica (Rice).